The primary structure comprises 92 residues: Acylphosphatase (92 aa).

An Acylphosphatase-like domain is found at 5 to 90 (TYRLVICGLV…GDFVGFQLRE (86 aa)). Active-site residues include R20 and N38.

The protein belongs to the acylphosphatase family.

It catalyses the reaction an acyl phosphate + H2O = a carboxylate + phosphate + H(+). This chain is Acylphosphatase (acyP), found in Albidiferax ferrireducens (strain ATCC BAA-621 / DSM 15236 / T118) (Rhodoferax ferrireducens).